The chain runs to 151 residues: UPF0178 protein Spea_2958 (151 aa).

It belongs to the UPF0178 family.

This Shewanella pealeana (strain ATCC 700345 / ANG-SQ1) protein is UPF0178 protein Spea_2958.